Reading from the N-terminus, the 155-residue chain is Protein phosphatase 1 regulatory subunit 17 (155 aa).

A disordered region spans residues 41 to 73; the sequence is KKKPRKGKNVQATLNVESDQKKPRRKDTPALHI. Over residues 58–69 the composition is skewed to basic and acidic residues; sequence SDQKKPRRKDTP. Phosphothreonine; by PKG/PRKG1 is present on residues threonine 68 and threonine 119.

Substrate for cGMP-dependent protein kinase. Phosphorylated by PRKG1 isoform alpha. Phosphorylation of Thr-68 and Thr-119 is required for its phosphatase activity. Post-translationally, substrate for cGMP-dependent protein kinase. In terms of tissue distribution, highly expressed in cerebellum.

In terms of biological role, inhibits phosphatase activities of protein phosphatase 1 (PP1) and protein phosphatase 2A (PP2A) complexes. The polypeptide is Protein phosphatase 1 regulatory subunit 17 (PPP1R17) (Homo sapiens (Human)).